The chain runs to 275 residues: Membrane protein insertase YidC (275 aa).

A signal peptide spans 1–22 (MKKYKRLLLMAGLVTLVFVLSA). Cys23 is lipidated: N-palmitoyl cysteine. Residue Cys23 is the site of S-diacylglycerol cysteine attachment. Transmembrane regions (helical) follow at residues 53–73 (LGGSVGIGIILFTLVIRIILL), 127–147 (YIGCLPLLVQLPIMMALYQAI), 169–189 (YLILPILAAVFTFASTYLSSM), and 206–226 (PAMIFFMGISLASSLSLYWVV). The span at 249–266 (EEAARQAKARERALERAK) shows a compositional bias: basic and acidic residues. The interval 249–275 (EEAARQAKARERALERAKSPKKKGKKK) is disordered.

The protein belongs to the OXA1/ALB3/YidC family. Type 2 subfamily.

Its subcellular location is the cell membrane. In terms of biological role, required for the insertion and/or proper folding and/or complex formation of integral membrane proteins into the membrane. Involved in integration of membrane proteins that insert both dependently and independently of the Sec translocase complex, as well as at least some lipoproteins. The protein is Membrane protein insertase YidC of Enterococcus faecalis (strain ATCC 700802 / V583).